We begin with the raw amino-acid sequence, 361 residues long: uncharacterized protein (361 aa).

This is an uncharacterized protein from Schizosaccharomyces pombe (strain 972 / ATCC 24843) (Fission yeast).